Here is a 49-residue protein sequence, read N- to C-terminus: Delta-actitoxin-Axm1h (49 aa).

Disulfide bonds link cysteine 4–cysteine 46, cysteine 6–cysteine 36, and cysteine 29–cysteine 47.

The protein belongs to the sea anemone sodium channel inhibitory toxin family. Type I subfamily.

The protein resides in the secreted. Its subcellular location is the nematocyst. Binds specifically to voltage-gated sodium channels (Nav) (site 3), thereby delaying their inactivation during signal transduction. Thus it may strongly stimulate mammalian cardiac muscle contraction. The polypeptide is Delta-actitoxin-Axm1h (Anthopleura xanthogrammica (Giant green sea anemone)).